Reading from the N-terminus, the 154-residue chain is Myoglobin (154 aa).

In terms of domain architecture, Globin spans glycine 2 to lysine 148. Serine 4 carries the phosphoserine modification. Histidine 65 contributes to the nitrite binding site. Histidine 65 contributes to the O2 binding site. Threonine 68 is subject to Phosphothreonine. Histidine 94 serves as a coordination point for heme b.

Belongs to the globin family. Monomeric.

The protein resides in the cytoplasm. The protein localises to the sarcoplasm. The enzyme catalyses Fe(III)-heme b-[protein] + nitric oxide + H2O = Fe(II)-heme b-[protein] + nitrite + 2 H(+). The catalysed reaction is H2O2 + AH2 = A + 2 H2O. Its function is as follows. Monomeric heme protein which primary function is to store oxygen and facilitate its diffusion within muscle tissues. Reversibly binds oxygen through a pentacoordinated heme iron and enables its timely and efficient release as needed during periods of heightened demand. Depending on the oxidative conditions of tissues and cells, and in addition to its ability to bind oxygen, it also has a nitrite reductase activity whereby it regulates the production of bioactive nitric oxide. Under stress conditions, like hypoxia and anoxia, it also protects cells against reactive oxygen species thanks to its pseudoperoxidase activity. This is Myoglobin (MB) from Callithrix jacchus (White-tufted-ear marmoset).